Consider the following 171-residue polypeptide: Iron-sulfur cluster assembly protein 3 (171 aa).

Residues 1–49 (MLRQTTKRAFLGLASQNPTPFPVVSRLYHPNVIDHYDNPRNVGSFDKND) constitute a mitochondrion transit peptide.

The protein belongs to the NifU family. Component of the core Fe-S cluster (ISC) assembly machinery. Requires [2Fe-2S] cluster as cofactor. Mostly expressed in flowers and pollen, and, to a lower extent, in leaves and roots.

Its subcellular location is the mitochondrion matrix. Its pathway is cofactor biosynthesis; iron-sulfur cluster biosynthesis. In terms of biological role, scaffold protein for the de novo synthesis of iron-sulfur (Fe-S) clusters within mitochondria, which is required for maturation of both mitochondrial and cytoplasmic [2Fe-2S] and [4Fe-4S] proteins. First, a [2Fe-2S] cluster is transiently assembled on the scaffold protein ISCU (ISU1, ISU2 or ISU3). In a second step, the cluster is released from ISCU, transferred to a glutaredoxin, followed by the formation of mitochondrial [2Fe-2S] proteins, the synthesis of [4Fe-4S] clusters and their target-specific insertion into the recipient apoproteins. Cluster assembly on ISCU depends on the function of the cysteine desulfurase complex NFS1-ISD11, which serves as the sulfur donor for cluster synthesis, the iron-binding protein frataxin as the putative iron donor, and the electron transfer chain comprised of ferredoxin reductase and ferredoxin, which receive their electrons from NADH. This is Iron-sulfur cluster assembly protein 3 (ISU3) from Arabidopsis thaliana (Mouse-ear cress).